The following is an 80-amino-acid chain: FXYD domain-containing ion transport regulator 7 (80 aa).

The Extracellular portion of the chain corresponds to 1–22; the sequence is MATPTQSPTNVPEETDPFFYDY. 3 O-linked (GlcNAc) threonine glycosylation sites follow: threonine 3, threonine 5, and threonine 9. The chain crosses the membrane as a helical span at residues 23-45; the sequence is ATVQTVGMTLATIMFVLGIIIII. Residues 46-80 are Cytoplasmic-facing; that stretch reads SKKVKCRKADSRSESPTCKSCKSELPSSAPGGGGV. The interval 56–80 is disordered; the sequence is SRSESPTCKSCKSELPSSAPGGGGV. A Phosphoserine modification is found at serine 73.

It belongs to the FXYD family. Regulatory subunit of the sodium/potassium-transporting ATPase which is composed of a catalytic alpha subunit, a non-catalytic beta subunit and an additional regulatory subunit. The regulatory subunit, a member of the FXYD protein family, modulates the enzymatic activity in a tissue- and isoform-specific way by changing affinities of the Na+/K+-ATPase toward Na(+), K(+) or ATP. In terms of processing, O-glycosylated; required for stabilization and translocation to the plasma membrane. Expressed specifically in brain. Expressed in both neurons and glia.

Its subcellular location is the cell membrane. Functionally, associates with and regulates the activity of the sodium/potassium-transporting ATPase (NKA) which catalyzes the hydrolysis of ATP coupled with the exchange of Na(+) and K(+) ions across the plasma membrane. Reduces the apparent affinity for external K(+), an effect that depends on the presence of external Na(+) and voltage. Increases the apparent affinity for intracellular Na(+). This is FXYD domain-containing ion transport regulator 7 (Fxyd7) from Rattus norvegicus (Rat).